The following is a 491-amino-acid chain: GTPase Der (491 aa).

EngA-type G domains follow at residues Pro54–Ser217 and Arg229–Asp402. GTP is bound by residues Gly60–Ser67, Asp107–Trp111, Asn169–Asp172, Gly235–Ser242, Asp282–Ile286, and Asn347–Asp350. A KH-like domain is found at Arg403–Glu485.

It belongs to the TRAFAC class TrmE-Era-EngA-EngB-Septin-like GTPase superfamily. EngA (Der) GTPase family. Associates with the 50S ribosomal subunit.

Its function is as follows. GTPase that plays an essential role in the late steps of ribosome biogenesis. This chain is GTPase Der, found in Paenarthrobacter aurescens (strain TC1).